We begin with the raw amino-acid sequence, 161 residues long: Small ribosomal subunit protein uS9 (161 aa).

This sequence belongs to the universal ribosomal protein uS9 family.

This chain is Small ribosomal subunit protein uS9, found in Rickettsia typhi (strain ATCC VR-144 / Wilmington).